A 222-amino-acid chain; its full sequence is MNKKVIAIVVGVVVVLVAILGVVAWFVPILKVGNIEVTGATRTDPDQVLEVSGIVEGENLFRVDATAAGQNIVELPWVKSVTVNRALPSTITVELTEREPAVFIKRADGDHVIDTEGKEIIIGTPPVGTVEVSGADEGNSEVLPAVIAVINAIKAQDAQMTESIQVVEAPDQFDILLKMNDGREIYWGSSENNHDKAVAMSTVLKREGQRWNISSPSMVTVR.

The Cytoplasmic segment spans residues 1–5; the sequence is MNKKV. Residues 6-26 form a helical membrane-spanning segment; that stretch reads IAIVVGVVVVLVAILGVVAWF. Topologically, residues 27–222 are extracellular; that stretch reads VPILKVGNIE…ISSPSMVTVR (196 aa). The region spanning 30–98 is the POTRA domain; sequence LKVGNIEVTG…STITVELTER (69 aa).

Belongs to the FtsQ/DivIB family. FtsQ subfamily.

The protein resides in the cell membrane. In terms of biological role, essential cell division protein. In Corynebacterium glutamicum (strain ATCC 13032 / DSM 20300 / JCM 1318 / BCRC 11384 / CCUG 27702 / LMG 3730 / NBRC 12168 / NCIMB 10025 / NRRL B-2784 / 534), this protein is Cell division protein FtsQ.